A 327-amino-acid chain; its full sequence is Auxin-responsive protein IAA18 (327 aa).

Disordered regions lie at residues valine 26 to lysine 45, glycine 52 to threonine 98, and asparagine 180 to alanine 202. An EAR-like (transcriptional repression) motif is present at residues leucine 49–leucine 53. Positions glutamine 58–isoleucine 69 are enriched in basic and acidic residues. A compositionally biased stretch (low complexity) spans glutamine 70–isoleucine 82. A compositionally biased stretch (polar residues) spans asparagine 180–glutamine 189. Over residues serine 190–alanine 202 the composition is skewed to basic and acidic residues. One can recognise a PB1 domain in the interval arginine 209–arginine 313.

The protein belongs to the Aux/IAA family. Homodimers and heterodimers. In terms of tissue distribution, highly expressed in flowers. Expressed in roots and etiolated seedlings.

It is found in the nucleus. In terms of biological role, aux/IAA proteins are short-lived transcriptional factors that function as repressors of early auxin response genes at low auxin concentrations. This chain is Auxin-responsive protein IAA18 (IAA18), found in Oryza sativa subsp. japonica (Rice).